We begin with the raw amino-acid sequence, 178 residues long: ATP synthase subunit delta (178 aa).

It belongs to the ATPase delta chain family. In terms of assembly, F-type ATPases have 2 components, F(1) - the catalytic core - and F(0) - the membrane proton channel. F(1) has five subunits: alpha(3), beta(3), gamma(1), delta(1), epsilon(1). F(0) has three main subunits: a(1), b(2) and c(10-14). The alpha and beta chains form an alternating ring which encloses part of the gamma chain. F(1) is attached to F(0) by a central stalk formed by the gamma and epsilon chains, while a peripheral stalk is formed by the delta and b chains.

It localises to the cell membrane. Its function is as follows. F(1)F(0) ATP synthase produces ATP from ADP in the presence of a proton or sodium gradient. F-type ATPases consist of two structural domains, F(1) containing the extramembraneous catalytic core and F(0) containing the membrane proton channel, linked together by a central stalk and a peripheral stalk. During catalysis, ATP synthesis in the catalytic domain of F(1) is coupled via a rotary mechanism of the central stalk subunits to proton translocation. Functionally, this protein is part of the stalk that links CF(0) to CF(1). It either transmits conformational changes from CF(0) to CF(1) or is implicated in proton conduction. This is ATP synthase subunit delta from Streptococcus equinus (Streptococcus bovis).